The chain runs to 208 residues: Probable thymidylate kinase (208 aa).

9-16 serves as a coordination point for ATP; the sequence is GIDGAGKS.

It belongs to the thymidylate kinase family.

It carries out the reaction dTMP + ATP = dTDP + ADP. The sequence is that of Probable thymidylate kinase from Thermococcus gammatolerans (strain DSM 15229 / JCM 11827 / EJ3).